A 257-amino-acid chain; its full sequence is UPF0246 protein RSc2009 (257 aa).

This sequence belongs to the UPF0246 family.

In Ralstonia nicotianae (strain ATCC BAA-1114 / GMI1000) (Ralstonia solanacearum), this protein is UPF0246 protein RSc2009.